The following is a 214-amino-acid chain: Thioredoxin-like 4, chloroplastic (214 aa).

The span at 1–20 (MITASLLPLPATSSSSGRRS) shows a compositional bias: low complexity. The segment at 1–68 (MITASLLPLP…STNGSLPGLP (68 aa)) is disordered. Residues 1–71 (MITASLLPLP…GSLPGLPPVV (71 aa)) constitute a chloroplast transit peptide. Pro residues predominate over residues 21-34 (LPPPTTTFPRPPPP). Residues 42 to 53 (SSSSSSASSTES) show a composition bias toward low complexity. In terms of domain architecture, Thioredoxin spans 72–199 (VEEEEEEFCP…IIAAIQKYTA (128 aa)). Active-site nucleophile residues include Cys-117 and Cys-120. Cysteines 117 and 120 form a disulfide.

It belongs to the thioredoxin family.

It localises to the plastid. Its subcellular location is the chloroplast. In terms of biological role, probable thiol-disulfide oxidoreductase that may participate in various redox reactions. This chain is Thioredoxin-like 4, chloroplastic, found in Oryza sativa subsp. japonica (Rice).